The chain runs to 363 residues: Chorismate synthase (363 aa).

Residues arginine 47 and arginine 53 each coordinate NADP(+). FMN contacts are provided by residues 124–126, glycine 286, 301–305, and arginine 327; these read RSS and KPTAT.

The protein belongs to the chorismate synthase family. In terms of assembly, homotetramer. FMNH2 serves as cofactor.

It catalyses the reaction 5-O-(1-carboxyvinyl)-3-phosphoshikimate = chorismate + phosphate. The protein operates within metabolic intermediate biosynthesis; chorismate biosynthesis; chorismate from D-erythrose 4-phosphate and phosphoenolpyruvate: step 7/7. Its function is as follows. Catalyzes the anti-1,4-elimination of the C-3 phosphate and the C-6 proR hydrogen from 5-enolpyruvylshikimate-3-phosphate (EPSP) to yield chorismate, which is the branch point compound that serves as the starting substrate for the three terminal pathways of aromatic amino acid biosynthesis. This reaction introduces a second double bond into the aromatic ring system. The chain is Chorismate synthase from Thermosynechococcus vestitus (strain NIES-2133 / IAM M-273 / BP-1).